The chain runs to 178 residues: Large ribosomal subunit protein uL6 (178 aa).

Belongs to the universal ribosomal protein uL6 family. As to quaternary structure, part of the 50S ribosomal subunit.

In terms of biological role, this protein binds to the 23S rRNA, and is important in its secondary structure. It is located near the subunit interface in the base of the L7/L12 stalk, and near the tRNA binding site of the peptidyltransferase center. This Leuconostoc mesenteroides subsp. mesenteroides (strain ATCC 8293 / DSM 20343 / BCRC 11652 / CCM 1803 / JCM 6124 / NCDO 523 / NBRC 100496 / NCIMB 8023 / NCTC 12954 / NRRL B-1118 / 37Y) protein is Large ribosomal subunit protein uL6.